The following is a 355-amino-acid chain: Peptide chain release factor 1 (355 aa).

Glutamine 231 carries the N5-methylglutamine modification.

This sequence belongs to the prokaryotic/mitochondrial release factor family. In terms of processing, methylated by PrmC. Methylation increases the termination efficiency of RF1.

Its subcellular location is the cytoplasm. Its function is as follows. Peptide chain release factor 1 directs the termination of translation in response to the peptide chain termination codons UAG and UAA. This Aliarcobacter butzleri (strain RM4018) (Arcobacter butzleri) protein is Peptide chain release factor 1.